The chain runs to 425 residues: Rho GTPase-activating protein 8 (425 aa).

Positions 13–168 constitute a CRAL-TRIO domain; it reads PFYDVARHGI…EVVRYDEKLQ (156 aa). A disordered region spans residues 169–192; the sequence is NLHKGQPPPPTKTPPPRPPLPTQQ. Residues 174–189 show a composition bias toward pro residues; sequence QPPPPTKTPPPRPPLP. One can recognise a Rho-GAP domain in the interval 195–381; sequence VSLQYLRDKN…LLIEYYDKVF (187 aa).

Highly expressed in skeletal muscle, lung and testis, and at lower levels in kidney, stomach and colon. Not detected in heart, liver, spleen, breast, brain, neonatal head or pancreas.

Its function is as follows. GTPase activator for the Rho-type GTPases by converting them to an inactive GDP-bound state. The sequence is that of Rho GTPase-activating protein 8 (Arhgap8) from Mus musculus (Mouse).